The sequence spans 816 residues: H(+)/Cl(-) exchange transporter 5 (816 aa).

Residues 1–28 (MAMWQGAMDNRGFQQGSFNSFQSSSSDE) form a disordered region. At 1 to 124 (MAMWQGAMDN…WALIHSVSDA (124 aa)) the chain is on the cytoplasmic side. A compositionally biased stretch (low complexity) spans 12–25 (GFQQGSFNSFQSSS). 2 helical membrane passes run 125–162 (FSGW…ICTE) and 208–231 (VNYF…VKVF). Residues 237–241 (GSGIP) carry the Selectivity filter part_1 motif. Residue Ser238 participates in chloride binding. Positions 240–247 (IPEIKTIL) form an intramembrane region, helical. The next 2 membrane-spanning stretches (helical) occupy residues 256–275 (LGKW…VSSG) and 281–300 (EGPL…HCFN). The short motif at 279–283 (GKEGP) is the Selectivity filter part_2 element. 2 intramembrane regions (helical) span residues 312 to 324 (VLSA…VSVA) and 328 to 336 (PIGGVLFSL). Transmembrane regions (helical) follow at residues 348–366 (LWRS…RSIN), 389–414 (LVPF…IAWC), 422–442 (LGKY…ILAF), 498–518 (MWQL…TFGM), and 523–542 (GLFI…LGVG). Residues 523–527 (GLFIP) carry the Selectivity filter part_3 motif. Phe525 is a binding site for chloride. Positions 570–584 (GLYAMVGAAACLGGV) form an intramembrane region, helical. An intramembrane region (note=Loop between two helices) is located at residues 585–587 (TRM). Residues 588–599 (TVSLVVIMFELT) constitute an intramembrane region (helical). Positions 600 to 604 (GGLEY) form an intramembrane region, note=Loop between two helices. Residues 605 to 622 (IVPLMAAAMTSKWVADAL) form a helical membrane-spanning segment. Topologically, residues 623-816 (GREGIYDAHI…NQDPDSILFN (194 aa)) are cytoplasmic. Tyr628 provides a ligand contact to chloride. CBS domains are found at residues 656 to 720 (MKPR…ARKK) and 752 to 812 (ILDL…DPDS). Residues Thr666, 687–689 (YSG), and 794–797 (TKKD) each bind ATP.

The protein belongs to the chloride channel (TC 2.A.49) family. ClC-5/CLCN5 subfamily. In terms of assembly, interacts with NEDD4 and NEDD4L. Post-translationally, ubiquitinated by NEDD4L in the presence of albumin; which promotes endocytosis and proteasomal degradation.

The protein localises to the golgi apparatus membrane. The protein resides in the endosome membrane. It is found in the cell membrane. The catalysed reaction is 2 chloride(in) + H(+)(out) = 2 chloride(out) + H(+)(in). Functionally, proton-coupled chloride transporter. Functions as antiport system and exchanges chloride ions against protons. Important for normal acidification of the endosome lumen. May play an important role in renal tubular function. The CLC channel family contains both chloride channels and proton-coupled anion transporters that exchange chloride or another anion for protons. The absence of conserved gating glutamate residues is typical for family members that function as channels. The chain is H(+)/Cl(-) exchange transporter 5 (CLCN5) from Sus scrofa (Pig).